A 216-amino-acid polypeptide reads, in one-letter code: Protein shisa-5 (216 aa).

The first 26 residues, 1–26 (MAAPAPAPRILVLLLLLLPAPEGAQS), serve as a signal peptide directing secretion. Topologically, residues 27 to 93 (ELCMISHGRK…SGFDSDPVAR (67 aa)) are extracellular. A helical membrane pass occupies residues 94-114 (FGTVIAIGVTLFVIAVVTVIV). At 115–216 (CCTCSCCCLY…AYMEPPKAVP (102 aa)) the chain is on the cytoplasmic side.

It belongs to the shisa family. In terms of assembly, interacts with PDCD6; PDCD6 can stabilize SHISA5.

The protein localises to the endoplasmic reticulum membrane. It localises to the nucleus membrane. Functionally, can induce apoptosis in a caspase-dependent manner and plays a role in p53/TP53-dependent apoptosis. The sequence is that of Protein shisa-5 (SHISA5) from Bos taurus (Bovine).